Consider the following 349-residue polypeptide: tRNA uridine(34) hydroxylase (349 aa).

One can recognise a Rhodanese domain in the interval 146-240 (DDPDAVFIDM…YARKAREQGL (95 aa)). C200 serves as the catalytic Cysteine persulfide intermediate. The segment covering 314 to 328 (PEEEQRRRRAGRENG) has biased composition (basic and acidic residues). The tract at residues 314–349 (PEEEQRRRRAGRENGNKIFNKSRGRLNTTLGIPDPE) is disordered.

This sequence belongs to the TrhO family.

The enzyme catalyses uridine(34) in tRNA + AH2 + O2 = 5-hydroxyuridine(34) in tRNA + A + H2O. Its function is as follows. Catalyzes oxygen-dependent 5-hydroxyuridine (ho5U) modification at position 34 in tRNAs. The polypeptide is tRNA uridine(34) hydroxylase (Cronobacter sakazakii (strain ATCC BAA-894) (Enterobacter sakazakii)).